A 342-amino-acid polypeptide reads, in one-letter code: S-adenosylmethionine:tRNA ribosyltransferase-isomerase (342 aa).

It belongs to the QueA family. Monomer.

Its subcellular location is the cytoplasm. It carries out the reaction 7-aminomethyl-7-carbaguanosine(34) in tRNA + S-adenosyl-L-methionine = epoxyqueuosine(34) in tRNA + adenine + L-methionine + 2 H(+). It functions in the pathway tRNA modification; tRNA-queuosine biosynthesis. Transfers and isomerizes the ribose moiety from AdoMet to the 7-aminomethyl group of 7-deazaguanine (preQ1-tRNA) to give epoxyqueuosine (oQ-tRNA). In Brevibacillus brevis (strain 47 / JCM 6285 / NBRC 100599), this protein is S-adenosylmethionine:tRNA ribosyltransferase-isomerase.